A 161-amino-acid chain; its full sequence is Allophycocyanin alpha-B chain (161 aa).

The residue at position 71 (asparagine 71) is an N4-methylasparagine. Cysteine 81 lines the (2R,3E)-phycocyanobilin pocket.

The protein belongs to the phycobiliprotein family. In terms of processing, contains one covalently linked bilin chromophore.

The protein localises to the plastid. It localises to the chloroplast thylakoid membrane. Its function is as follows. Allophycocyanin is a photosynthetic bile pigment-protein complex with maximum absorption at approximately 650 nanometers. This is Allophycocyanin alpha-B chain (apcD) from Porphyra purpurea (Red seaweed).